The following is a 385-amino-acid chain: Putative hydroxypyruvate reductase (385 aa).

It carries out the reaction (R)-glycerate + NAD(+) = 3-hydroxypyruvate + NADH + H(+). The catalysed reaction is (R)-glycerate + NADP(+) = 3-hydroxypyruvate + NADPH + H(+). The protein operates within carbohydrate acid metabolism; tartrate degradation; 3-hydroxypyruvate from D-glycerate: step 1/1. In terms of biological role, degrades an unidentified toxic product from the first step of tartrate degradation. This is Putative hydroxypyruvate reductase (ttuD) from Agrobacterium vitis (Rhizobium vitis).